Here is a 294-residue protein sequence, read N- to C-terminus: Proteasome subunit beta 1 (294 aa).

The propeptide at 1–65 (MTADRPALRT…MESGDLAPHG (65 aa)) is removed in mature form; by autocatalysis. Threonine 66 functions as the Nucleophile in the catalytic mechanism.

The protein belongs to the peptidase T1B family. In terms of assembly, the 20S proteasome core is composed of 14 alpha and 14 beta subunits that assemble into four stacked heptameric rings, resulting in a barrel-shaped structure. The two inner rings, each composed of seven catalytic beta subunits, are sandwiched by two outer rings, each composed of seven alpha subunits. All four combinations of alpha- and beta-subunits (beta2-alpha1, beta2-alpha2, beta1-alpha2 and beta1-alpha1) yield fully assembled and proteolytically active proteasomes. The catalytic chamber with the active sites is on the inside of the barrel. Has probably a gated structure, the ends of the cylinder being occluded by the N-termini of the alpha-subunits. Is likely capped by the proteasome-associated ATPase, ARC.

It localises to the cytoplasm. The catalysed reaction is Cleavage of peptide bonds with very broad specificity.. It participates in protein degradation; proteasomal Pup-dependent pathway. Its activity is regulated as follows. The formation of the proteasomal ATPase ARC-20S proteasome complex, likely via the docking of the C-termini of ARC into the intersubunit pockets in the alpha-rings, may trigger opening of the gate for substrate entry. Interconversion between the open-gate and close-gate conformations leads to a dynamic regulation of the 20S proteasome proteolysis activity. In terms of biological role, component of the proteasome core, a large protease complex with broad specificity involved in protein degradation. The R.erythropolis proteasomes are able to cleave oligopeptides after Tyr, Phe and Leu, very poorly after Arg but not after Glu. Thus, displays chymotrypsin-like activity, low trypsin-like activity but no caspase-like activity. The protein is Proteasome subunit beta 1 of Rhodococcus erythropolis (Arthrobacter picolinophilus).